Consider the following 99-residue polypeptide: Large ribosomal subunit protein uL23 (99 aa).

It belongs to the universal ribosomal protein uL23 family. In terms of assembly, part of the 50S ribosomal subunit. Contacts protein L29, and trigger factor when it is bound to the ribosome.

One of the early assembly proteins it binds 23S rRNA. One of the proteins that surrounds the polypeptide exit tunnel on the outside of the ribosome. Forms the main docking site for trigger factor binding to the ribosome. In Pseudomonas aeruginosa (strain LESB58), this protein is Large ribosomal subunit protein uL23.